The following is a 627-amino-acid chain: 1,4-alpha-glucan branching enzyme GlgB (627 aa).

Residue Asp-309 is the Nucleophile of the active site. The active-site Proton donor is Glu-352.

The protein belongs to the glycosyl hydrolase 13 family. GlgB subfamily. As to quaternary structure, monomer.

The enzyme catalyses Transfers a segment of a (1-&gt;4)-alpha-D-glucan chain to a primary hydroxy group in a similar glucan chain.. The protein operates within glycan biosynthesis; glycogen biosynthesis. Catalyzes the formation of the alpha-1,6-glucosidic linkages in glycogen by scission of a 1,4-alpha-linked oligosaccharide from growing alpha-1,4-glucan chains and the subsequent attachment of the oligosaccharide to the alpha-1,6 position. In Bacillus subtilis (strain 168), this protein is 1,4-alpha-glucan branching enzyme GlgB (glgB).